A 255-amino-acid chain; its full sequence is Taurine import ATP-binding protein TauB (255 aa).

Residues 2–229 (LQISHLYADY…RFVAGESSRS (228 aa)) form the ABC transporter domain. An ATP-binding site is contributed by 34 to 41 (GPSGCGKT).

This sequence belongs to the ABC transporter superfamily. Taurine importer (TC 3.A.1.17.1) family. The complex is composed of two ATP-binding proteins (TauB), two transmembrane proteins (TauC) and a solute-binding protein (TauA).

Its subcellular location is the cell inner membrane. The catalysed reaction is taurine(out) + ATP + H2O = taurine(in) + ADP + phosphate + H(+). Functionally, part of the ABC transporter complex TauABC involved in taurine import. Responsible for energy coupling to the transport system. This Shigella dysenteriae serotype 1 (strain Sd197) protein is Taurine import ATP-binding protein TauB.